Reading from the N-terminus, the 137-residue chain is Ribosomal RNA large subunit methyltransferase H (137 aa).

Residues L56, G85, and L104 to L109 contribute to the S-adenosyl-L-methionine site.

The protein belongs to the RNA methyltransferase RlmH family. In terms of assembly, homodimer.

Its subcellular location is the cytoplasm. It catalyses the reaction pseudouridine(1915) in 23S rRNA + S-adenosyl-L-methionine = N(3)-methylpseudouridine(1915) in 23S rRNA + S-adenosyl-L-homocysteine + H(+). Specifically methylates the pseudouridine at position 1915 (m3Psi1915) in 23S rRNA. The polypeptide is Ribosomal RNA large subunit methyltransferase H (Thermus thermophilus (strain ATCC BAA-163 / DSM 7039 / HB27)).